Here is a 330-residue protein sequence, read N- to C-terminus: Protein LEG1 homolog (330 aa).

The first 20 residues, Met-1–Ala-20, serve as a signal peptide directing secretion. N-linked (GlcNAc...) asparagine glycosylation is found at Asn-24 and Asn-69.

The protein belongs to the LEG1 family. In terms of tissue distribution, detected in saliva and in hypomineralized dental enamel (at protein level).

The protein localises to the secreted. Its function is as follows. May be involved in early liver development. The sequence is that of Protein LEG1 homolog from Homo sapiens (Human).